Reading from the N-terminus, the 472-residue chain is Ribulose bisphosphate carboxylase/oxygenase activase, chloroplastic (472 aa).

Residues 1–58 (MATAVSTVGAATRAPLNLNGSSAGASVPTSGFLGSSLKKHTNVRFPSSSRTTSMTVKA) constitute a chloroplast transit peptide. Residue 163–170 (GGKGQGKS) coordinates ATP. The disordered stretch occupies residues 448 to 472 (GCTDPEAKNYDPTARSDDGSCTYNL). Over residues 452–465 (PEAKNYDPTARSDD) the composition is skewed to basic and acidic residues.

The protein belongs to the RuBisCO activase family.

The protein resides in the plastid. It is found in the chloroplast stroma. Activation of RuBisCO (ribulose-1,5-bisphosphate carboxylase/oxygenase; EC 4.1.1.39) involves the ATP-dependent carboxylation of the epsilon-amino group of lysine leading to a carbamate structure. The polypeptide is Ribulose bisphosphate carboxylase/oxygenase activase, chloroplastic (Spinacia oleracea (Spinach)).